A 284-amino-acid polypeptide reads, in one-letter code: 2-dehydro-3-deoxyphosphooctonate aldolase (284 aa).

It belongs to the KdsA family.

The protein localises to the cytoplasm. The enzyme catalyses D-arabinose 5-phosphate + phosphoenolpyruvate + H2O = 3-deoxy-alpha-D-manno-2-octulosonate-8-phosphate + phosphate. Its pathway is carbohydrate biosynthesis; 3-deoxy-D-manno-octulosonate biosynthesis; 3-deoxy-D-manno-octulosonate from D-ribulose 5-phosphate: step 2/3. The protein operates within bacterial outer membrane biogenesis; lipopolysaccharide biosynthesis. The polypeptide is 2-dehydro-3-deoxyphosphooctonate aldolase (Histophilus somni (strain 2336) (Haemophilus somnus)).